Consider the following 860-residue polypeptide: Leucine-rich repeat and death domain-containing protein 1 (860 aa).

The segment at 1–103 (MSEKEGMSEV…TGTSQSLSSL (103 aa)) is disordered. Residues 50–72 (KSSNQIYETHPRQNTLESTSSSG) show a composition bias toward polar residues. Over residues 90–103 (TSTRTGTSQSLSSL) the composition is skewed to low complexity. LRR repeat units lie at residues 139–163 (LGAD…ILKI), 164–186 (KYVK…DSGD), 187–210 (LLGL…IQLL), 211–233 (HNLR…ISQL), 235–256 (NIRQ…LECL), 257–279 (GNLE…LPSL), 281–302 (TLRV…LCFL), 303–325 (PKLI…IREL), 326–348 (KNLE…IFQL), 350–371 (KIKE…IENF), 372–394 (RELR…ISCC), 396–417 (MLEC…IHKL), 419–440 (NLRK…ISHL), 441–463 (NNIC…IKNC), 465–486 (KIIK…LCAL), 487–510 (DSLY…SFSK), 512–532 (LLHL…FCSL), 533–555 (INLK…ISNM), 557–578 (SLHV…LCTL), 579–601 (ENLQ…ICNL), 603–624 (GIQK…LCQL), 627–650 (LEQL…LSNM), 651–673 (TQLK…IGEL), 675–696 (NLVS…LLSL), 697–719 (NDLQ…IYNI), and 721–742 (SLKE…ICKG). The Death domain maps to 764-852 (EKIFKIVANN…EIMDKITALN (89 aa)). Residues 856 to 860 (RAIKF) form an LRR 27 repeat.

This Homo sapiens (Human) protein is Leucine-rich repeat and death domain-containing protein 1 (LRRD1).